The chain runs to 122 residues: Large ribosomal subunit protein bL19 (122 aa).

The protein belongs to the bacterial ribosomal protein bL19 family.

In terms of biological role, this protein is located at the 30S-50S ribosomal subunit interface and may play a role in the structure and function of the aminoacyl-tRNA binding site. In Mycoplasmoides gallisepticum (strain R(low / passage 15 / clone 2)) (Mycoplasma gallisepticum), this protein is Large ribosomal subunit protein bL19.